We begin with the raw amino-acid sequence, 237 residues long: MRSGVIAQKLGMTRVYNDAGEHVPVTVLRMENCHVVAQRTVEKNGYTAVQLGVGMAKVKNTSKAMRGHFAKAEVEPKAKLAEFRVSPDNLLEVGVEITAEHFVAGQKVDVTGTSIGKGFAGVMKRHNFGGHRASHGNSITHRSHGSTGQRQDPGKVFKGKKMAGHMGQTRVTTQNIEVVSTDSDRGLILVRGAVPGSKGAWILVRDAVKASLPENAPKPAGLRAGAKAEAAATEGGE.

Disordered regions lie at residues alanine 133 to lysine 155 and proline 213 to glutamate 237. Residues histidine 135–arginine 150 show a composition bias toward polar residues. Residue glutamine 151 is modified to N5-methylglutamine. A compositionally biased stretch (low complexity) spans alanine 220 to glutamate 237.

This sequence belongs to the universal ribosomal protein uL3 family. In terms of assembly, part of the 50S ribosomal subunit. Forms a cluster with proteins L14 and L19. Post-translationally, methylated by PrmB.

Its function is as follows. One of the primary rRNA binding proteins, it binds directly near the 3'-end of the 23S rRNA, where it nucleates assembly of the 50S subunit. In Brucella abortus (strain S19), this protein is Large ribosomal subunit protein uL3.